The following is a 724-amino-acid chain: Probable serine/threonine-protein kinase KKQ8 (724 aa).

Disordered stretches follow at residues 1-81 (MVMQ…RQRS) and 93-188 (HPFR…KDIL). Phosphoserine is present on Ser-19. Low complexity predominate over residues 45–54 (PYRSSSTSPK). Residues 95 to 106 (FRQTGSGASNSP) are compositionally biased toward polar residues. Residues 143–162 (RSSSVSSCDSSNGTTSSSDS) show a composition bias toward low complexity. 3 positions are modified to phosphoserine: Ser-232, Ser-238, and Ser-241. The segment at 329 to 355 (SQTNHEKRTGQSPNDSNRSSPTQGRED) is disordered. Residues 338-351 (GQSPNDSNRSSPTQ) show a composition bias toward polar residues. Residues 412–712 (GHPVGLVGAG…VGKLLDMQWM (301 aa)) enclose the Protein kinase domain. Residues 418–426 (VGAGAYGEV) and Lys-455 each bind ATP. The active-site Proton acceptor is the Asp-563.

Belongs to the protein kinase superfamily. CAMK Ser/Thr protein kinase family. NPR/HAL subfamily. HAL5 sub-subfamily.

The protein localises to the cytoplasm. The enzyme catalyses L-seryl-[protein] + ATP = O-phospho-L-seryl-[protein] + ADP + H(+). It catalyses the reaction L-threonyl-[protein] + ATP = O-phospho-L-threonyl-[protein] + ADP + H(+). The chain is Probable serine/threonine-protein kinase KKQ8 (KKQ8) from Saccharomyces cerevisiae (strain ATCC 204508 / S288c) (Baker's yeast).